A 378-amino-acid chain; its full sequence is Alcohol dehydrogenase class-3 (378 aa).

Ala1 is subject to N-acetylalanine. Cys46 serves as a coordination point for Zn(2+). An NAD(+)-binding site is contributed by His47. An alcohol is bound by residues Thr48 and His68. His68, Glu69, Cys98, Cys101, Cys104, Cys112, and Cys176 together coordinate Zn(2+). Residues 201–206 (GLGTVG), Asp225, Lys230, 294–296 (VGV), 319–321 (TAF), and Arg371 each bind NAD(+).

The protein belongs to the zinc-containing alcohol dehydrogenase family. Class-III subfamily. Homodimer. Zn(2+) is required as a cofactor.

The protein resides in the cytoplasm. It carries out the reaction a primary alcohol + NAD(+) = an aldehyde + NADH + H(+). It catalyses the reaction a secondary alcohol + NAD(+) = a ketone + NADH + H(+). The catalysed reaction is S-(hydroxymethyl)glutathione + NADP(+) = S-formylglutathione + NADPH + H(+). The enzyme catalyses S-(hydroxymethyl)glutathione + NAD(+) = S-formylglutathione + NADH + H(+). Class-III ADH is remarkably ineffective in oxidizing ethanol, but it readily catalyzes the oxidation of long-chain primary alcohols and the oxidation of S-(hydroxymethyl) glutathione. The polypeptide is Alcohol dehydrogenase class-3 (Pisum sativum (Garden pea)).